Reading from the N-terminus, the 315-residue chain is Ribonuclease Z (315 aa).

Residues His61, His63, Asp65, His66, His151, Asp219, and His278 each coordinate Zn(2+). The active-site Proton acceptor is Asp65.

This sequence belongs to the RNase Z family. In terms of assembly, homodimer. Requires Zn(2+) as cofactor.

The catalysed reaction is Endonucleolytic cleavage of RNA, removing extra 3' nucleotides from tRNA precursor, generating 3' termini of tRNAs. A 3'-hydroxy group is left at the tRNA terminus and a 5'-phosphoryl group is left at the trailer molecule.. Zinc phosphodiesterase, which displays some tRNA 3'-processing endonuclease activity. Probably involved in tRNA maturation, by removing a 3'-trailer from precursor tRNA. This chain is Ribonuclease Z, found in Clostridium botulinum (strain Eklund 17B / Type B).